The chain runs to 561 residues: Putative transport protein ASA_2308 (561 aa).

A run of 5 helical transmembrane segments spans residues 8–28, 37–57, 66–86, 90–110, and 161–181; these read LLHQ…LLLG, IGNT…GFEF, FMLF…SVFL, IHYI…TVGL, and NMGI…MLVV. 2 consecutive RCK C-terminal domains span residues 206–291 and 293–376; these read SDNE…NYRN and KEVF…KIGF. 5 consecutive transmembrane segments (helical) span residues 386 to 406, 409 to 429, 450 to 470, 476 to 496, and 541 to 561; these read LVAF…SLVF, LEFG…MGYL, LGLA…ILDH, AVVL…GYLF, and TYAV…GFWF.

It belongs to the AAE transporter (TC 2.A.81) family. YbjL subfamily.

The protein localises to the cell membrane. The sequence is that of Putative transport protein ASA_2308 from Aeromonas salmonicida (strain A449).